Here is a 301-residue protein sequence, read N- to C-terminus: E3 ubiquitin-protein ligase DIS1 (301 aa).

The RING-type; degenerate zinc-finger motif lies at Cys-53–Arg-89. The SIAH-type; degenerate zinc-finger motif lies at Ser-106–Lys-166.

This sequence belongs to the SINA (Seven in absentia) family. Homodimer. Interacts with NEK6. Interacts with SKIPA.

It is found in the nucleus. Its subcellular location is the cytoplasm. It catalyses the reaction S-ubiquitinyl-[E2 ubiquitin-conjugating enzyme]-L-cysteine + [acceptor protein]-L-lysine = [E2 ubiquitin-conjugating enzyme]-L-cysteine + N(6)-ubiquitinyl-[acceptor protein]-L-lysine.. It participates in protein modification; protein ubiquitination. Functionally, E3 ubiquitin-protein ligase that mediates ubiquitination and subsequent proteasomal degradation of target proteins. E3 ubiquitin ligases accept ubiquitin from an E2 ubiquitin-conjugating enzyme in the form of a thioester and then directly transfers the ubiquitin to targeted substrates. Plays a negative role in drought stress tolerance through transcriptional and post-translational regulation of diverse stress-related genes. Interacts with the serine/threonine-protein kinase NEK6 and promotes its degradation via the 26S proteasome-dependent pathway. This chain is E3 ubiquitin-protein ligase DIS1, found in Oryza sativa subsp. japonica (Rice).